The following is a 528-amino-acid chain: Probable serine protease HtrA1 (528 aa).

The segment at 1–70 (MDTRVDTDNA…RPSGVQGSFV (70 aa)) is disordered. Residues 1–178 (MDTRVDTDNA…DVLFGGKVSY (178 aa)) are Cytoplasmic-facing. The segment covering 31–40 (NNGGPNGGGR) has biased composition (gly residues). A helical membrane pass occupies residues 179-199 (LALGILVAIALVIGGIGGVIG). Over 200-528 (RKTAEVVDAF…LTVKPDPDST (329 aa)) the chain is Periplasmic. Residues histidine 270, aspartate 306, and serine 387 each act as charge relay system in the active site. Positions 426–487 (LVANSLIKDG…VIVKVGNRAV (62 aa)) constitute a PDZ domain.

This sequence belongs to the peptidase S1C family. In terms of assembly, the C-terminal region exhibits both monomeric and trimeric forms in solution.

It localises to the cell inner membrane. The enzyme catalyses Acts on substrates that are at least partially unfolded. The cleavage site P1 residue is normally between a pair of hydrophobic residues, such as Val-|-Val.. Functionally, essential protein that may act as a regulatory protease that is conditionally activated upon appropriate environmental triggers. This Mycobacterium tuberculosis (strain ATCC 25618 / H37Rv) protein is Probable serine protease HtrA1.